The sequence spans 212 residues: dITP/XTP pyrophosphatase (212 aa).

Residue 7–12 (SNNAKK) participates in substrate binding. The Mg(2+) site is built by Glu39 and Asp68. Catalysis depends on Asp68, which acts as the Proton acceptor. Substrate-binding positions include Ser69, 165-168 (FGYD), Lys188, and 193-194 (HR).

It belongs to the HAM1 NTPase family. In terms of assembly, homodimer. Mg(2+) serves as cofactor.

It catalyses the reaction XTP + H2O = XMP + diphosphate + H(+). The enzyme catalyses dITP + H2O = dIMP + diphosphate + H(+). It carries out the reaction ITP + H2O = IMP + diphosphate + H(+). Functionally, pyrophosphatase that catalyzes the hydrolysis of nucleoside triphosphates to their monophosphate derivatives, with a high preference for the non-canonical purine nucleotides XTP (xanthosine triphosphate), dITP (deoxyinosine triphosphate) and ITP. Seems to function as a house-cleaning enzyme that removes non-canonical purine nucleotides from the nucleotide pool, thus preventing their incorporation into DNA/RNA and avoiding chromosomal lesions. This is dITP/XTP pyrophosphatase from Leptothrix cholodnii (strain ATCC 51168 / LMG 8142 / SP-6) (Leptothrix discophora (strain SP-6)).